The sequence spans 261 residues: Phosphatidylglycerol--prolipoprotein diacylglyceryl transferase (261 aa).

3 consecutive transmembrane segments (helical) span residues 20–40 (LAIHWYAIFIVGGAALAVWLA), 54–74 (IIDFVLFAFPLGIVGARLYYV), and 94–114 (GGGAIYGSLIAGAIVLFVFSY). Arg139 provides a ligand contact to a 1,2-diacyl-sn-glycero-3-phospho-(1'-sn-glycerol). The next 3 membrane-spanning stretches (helical) occupy residues 175–195 (MPTFLFESIGTLSGFILVMVF), 205–225 (GDIFSFYLVWYGAVRFIVEGM), and 235–255 (ARVSQWLSVLLVIVGLVLFIY).

This sequence belongs to the Lgt family.

The protein resides in the cell membrane. It catalyses the reaction L-cysteinyl-[prolipoprotein] + a 1,2-diacyl-sn-glycero-3-phospho-(1'-sn-glycerol) = an S-1,2-diacyl-sn-glyceryl-L-cysteinyl-[prolipoprotein] + sn-glycerol 1-phosphate + H(+). The protein operates within protein modification; lipoprotein biosynthesis (diacylglyceryl transfer). Functionally, catalyzes the transfer of the diacylglyceryl group from phosphatidylglycerol to the sulfhydryl group of the N-terminal cysteine of a prolipoprotein, the first step in the formation of mature lipoproteins. This is Phosphatidylglycerol--prolipoprotein diacylglyceryl transferase from Lactococcus lactis subsp. lactis (strain IL1403) (Streptococcus lactis).